The chain runs to 341 residues: MEHATPLAVPLGQAEVFQALQRLHMTIFSQSVSPCGKFLAAGNNYGQIAIFSLSAALSSEAKEESKKPMVTFHAHDGPVYSMVSTDRHLLSAGDGEVKGWLWAEILKKGCKELWRRQPPYRTSLEVPEINALLLVPKENSLILAGGDCQLHTMDLETGTFTRALRGHTDYIHCLALRERSPEVLSGGEDGAVRLWDLRIAKEVQTIEVYKHEECSRPHNGRWIGCLATDSDWMVCGGGPALTLWHLRSSTPTTVFPIRAPQKHVTFYQDLILSAGQGCCVNHWQLSGELKAQVPGSSPGLLSLSLNQQPAAPECKVLTASGNSCRVDVFTNLGYRAFSLSF.

WD repeat units follow at residues Arg22–Ala61, Ala74–Glu112, Leu124–Ala163, Gly166–Thr205, Ser215–Val254, Pro256–Val293, and Gly295–Leu339. Ser180 bears the Phosphoserine mark.

The protein belongs to the WD repeat THOC6 family. Component of the THO subcomplex, which is composed of THOC1, THOC2, THOC3, THOC5, THOC6 and THOC7. The THO subcomplex interacts with DDX39B to form the THO-DDX39B complex which multimerizes into a 28-subunit tetrameric assembly. Component of the transcription/export (TREX) complex at least composed of ALYREF/THOC4, DDX39B, SARNP/CIP29, CHTOP and the THO subcomplex; in the complex interacts with THOC5; together with THOC5 and THOC7, plays a key structural role in the oligomerization of the THO-DDX39B complex. TREX seems to have a dynamic structure involving ATP-dependent remodeling.

It is found in the nucleus. The protein localises to the nucleus speckle. Its function is as follows. Component of the THO subcomplex of the TREX complex which is thought to couple mRNA transcription, processing and nuclear export, and which specifically associates with spliced mRNA and not with unspliced pre-mRNA. Plays a key structural role in the oligomerization of the THO-DDX39B complex. TREX is recruited to spliced mRNAs by a transcription-independent mechanism, binds to mRNA upstream of the exon-junction complex (EJC) and is recruited in a splicing- and cap-dependent manner to a region near the 5' end of the mRNA where it functions in mRNA export to the cytoplasm via the TAP/NXF1 pathway. Plays a role in apoptosis negative control involved in brain development. The chain is THO complex subunit 6 homolog (Thoc6) from Rattus norvegicus (Rat).